Consider the following 139-residue polypeptide: Large ribosomal subunit protein uL16 (139 aa).

Basic residues predominate over residues 1-19 (MLIPRRVKYRKQHHPKRTG). Residues 1-23 (MLIPRRVKYRKQHHPKRTGAAKG) form a disordered region.

It belongs to the universal ribosomal protein uL16 family. In terms of assembly, part of the 50S ribosomal subunit.

Its function is as follows. Binds 23S rRNA and is also seen to make contacts with the A and possibly P site tRNAs. This chain is Large ribosomal subunit protein uL16, found in Cutibacterium acnes (strain DSM 16379 / KPA171202) (Propionibacterium acnes).